A 372-amino-acid polypeptide reads, in one-letter code: Glutamate 5-kinase (372 aa).

Residue K14 coordinates ATP. Residues S54, D141, and N153 each contribute to the substrate site. Residue 173–174 (TD) participates in ATP binding. Residues 280–358 (RGRVVIDGGA…SEIESVLGHL (79 aa)) enclose the PUA domain.

It belongs to the glutamate 5-kinase family.

It is found in the cytoplasm. The enzyme catalyses L-glutamate + ATP = L-glutamyl 5-phosphate + ADP. It functions in the pathway amino-acid biosynthesis; L-proline biosynthesis; L-glutamate 5-semialdehyde from L-glutamate: step 1/2. Catalyzes the transfer of a phosphate group to glutamate to form L-glutamate 5-phosphate. The protein is Glutamate 5-kinase of Cupriavidus taiwanensis (strain DSM 17343 / BCRC 17206 / CCUG 44338 / CIP 107171 / LMG 19424 / R1) (Ralstonia taiwanensis (strain LMG 19424)).